The sequence spans 323 residues: Penicillopepsin-1 (323 aa).

An O-linked (Man...) serine glycan is attached at serine 3. O-linked (Man...) threonine glycosylation occurs at threonine 7. The Peptidase A1 domain maps to 17–320 (YITPVTIGGT…DSDGPQLGFA (304 aa)). Residues aspartate 33 and aspartate 213 contribute to the active site. A disulfide bridge links cysteine 249 with cysteine 283.

Belongs to the peptidase A1 family. Monomer.

Its subcellular location is the secreted. The catalysed reaction is Hydrolysis of proteins with broad specificity similar to that of pepsin A, preferring hydrophobic residues at P1 and P1', but also cleaving 20-Gly-|-Glu-21 in the B chain of insulin. Clots milk, and activates trypsinogen.. Functionally, secreted aspartic endopeptidase that allows assimilation of proteinaceous substrates. The scissile peptide bond is attacked by a nucleophilic water molecule activated by two aspartic residues in the active site. Shows a broad primary substrate specificity. Favors hydrophobic residues at the P1 and P1' positions, but can also activate trypsinogen and hydrolyze the B chain of insulin between positions 'Gly-20' and 'Glu-21'. This is Penicillopepsin-1 from Penicillium janthinellum (Penicillium vitale).